A 72-amino-acid polypeptide reads, in one-letter code: Translation initiation factor IF-1 (72 aa).

The region spanning 1–72 (MAKEELLEMR…TKGRITYRFK (72 aa)) is the S1-like domain.

It belongs to the IF-1 family. As to quaternary structure, component of the 30S ribosomal translation pre-initiation complex which assembles on the 30S ribosome in the order IF-2 and IF-3, IF-1 and N-formylmethionyl-tRNA(fMet); mRNA recruitment can occur at any time during PIC assembly.

The protein resides in the cytoplasm. Functionally, one of the essential components for the initiation of protein synthesis. Stabilizes the binding of IF-2 and IF-3 on the 30S subunit to which N-formylmethionyl-tRNA(fMet) subsequently binds. Helps modulate mRNA selection, yielding the 30S pre-initiation complex (PIC). Upon addition of the 50S ribosomal subunit IF-1, IF-2 and IF-3 are released leaving the mature 70S translation initiation complex. The polypeptide is Translation initiation factor IF-1 (Sphingopyxis alaskensis (strain DSM 13593 / LMG 18877 / RB2256) (Sphingomonas alaskensis)).